The sequence spans 454 residues: Cell division cycle-associated 7-like protein (454 aa).

Positions 9–33 (IPKEVADIFNAPSDDEEFVGFRDDV) match the Integrase domain-binding motif 1 (IBM1) motif. The residue at position 21 (S21) is a Phosphoserine. Residues 65–91 (FTEELRRIFIEDTDSETEDFAGFTQSD) carry the Integrase domain-binding motif 2 (IBM2) motif. Position 77 is a phosphothreonine (T77). Position 79 is a phosphoserine (S79). Residues T81 and T88 each carry the phosphothreonine modification. 2 disordered regions span residues 103–169 (VESD…LFSS) and 188–213 (QVIQ…SSDA). Phosphoserine occurs at positions 105, 108, 117, 138, 139, 162, 195, and 197. Residues 117 to 126 (SEEEEDEEED) show a composition bias toward acidic residues. Residues 213-235 (ALLKRTMNIKENKAMLAQLLAEL) are MYC-binding. Residues K222 and K225 each participate in a glycyl lysine isopeptide (Lys-Gly) (interchain with G-Cter in SUMO2) cross-link. S261 carries the phosphoserine modification.

Interacts with MYC. Interacts (via IBM motifs) with PSIP1 (via IBD domain); phosphorylation increases its affinity for PSIP1. Post-translationally, phosphorylation increases its interaction with PSIP1. Ubiquitous. Overexpressed in medulloblastoma.

Its subcellular location is the cytoplasm. It localises to the nucleus. Functionally, plays a role in transcriptional regulation as a repressor that inhibits monoamine oxidase A (MAOA) activity and gene expression by binding to the promoter. Plays an important oncogenic role in mediating the full transforming effect of MYC in medulloblastoma cells. Involved in apoptotic signaling pathways; May act downstream of P38-kinase and BCL-2, but upstream of CASP3/caspase-3 as well as CCND1/cyclin D1 and E2F1. The chain is Cell division cycle-associated 7-like protein (CDCA7L) from Homo sapiens (Human).